We begin with the raw amino-acid sequence, 311 residues long: Taste receptor type 2 member 9 (311 aa).

The Extracellular segment spans residues 1 to 9 (MPSTIEAIY). Residues 10 to 32 (IILIAGELTIGIWGNGFIVLVNC) traverse the membrane as a helical segment. Residues 33–52 (IDWLKRRDVSLIDIILISLA) are Cytoplasmic-facing. Residues 53–72 (ISRICLLCVISLDGFFILLF) form a helical membrane-spanning segment. The Extracellular segment spans residues 73–86 (PGTYDTNVLESIMD). Residues 87-109 (AVWTFANNSSLWFTSCLSIFYLL) traverse the membrane as a helical segment. Residues 110 to 128 (KIANISHPFFFWLKLKINK) are Cytoplasmic-facing. A helical membrane pass occupies residues 129–146 (VILAILLGSFLISLIISF). The Extracellular segment spans residues 147-179 (PINGMWYNLFKVSHEENITWAFKVSTIPGAFKQ). The N-linked (GlcNAc...) asparagine glycan is linked to N163. Residues 180 to 202 (LTLNLGAMVPFILCLISFFLLLF) traverse the membrane as a helical segment. The Cytoplasmic portion of the chain corresponds to 203–233 (SLVRHTKQIQLHATGFRDPSTEAHMRAVKAV). Residues 234–256 (IIFLLLLILYYPVFLVMTSSTLI) traverse the membrane as a helical segment. Topologically, residues 257–260 (PQGK) are extracellular. A helical transmembrane segment spans residues 261–283 (LVLMIGDIVTVIFPSSHSFILIM). Residues 284 to 311 (GNSKLRAAFLKMLRFVKGFLRRRKPFVP) are Cytoplasmic-facing.

This sequence belongs to the G-protein coupled receptor T2R family.

It is found in the membrane. Gustducin-coupled receptor implicated in the perception of bitter compounds in the oral cavity and the gastrointestinal tract. Signals through PLCB2 and the calcium-regulated cation channel TRPM5. The sequence is that of Taste receptor type 2 member 9 (TAS2R9) from Macaca mulatta (Rhesus macaque).